The primary structure comprises 160 residues: Phosphatidylinositol N-acetylglucosaminyltransferase subunit gpi15 (160 aa).

Helical transmembrane passes span G22–I42 and I48–V68.

The protein belongs to the PIGH family.

The protein resides in the endoplasmic reticulum membrane. The enzyme catalyses a 1,2-diacyl-sn-glycero-3-phospho-(1D-myo-inositol) + UDP-N-acetyl-alpha-D-glucosamine = a 6-(N-acetyl-alpha-D-glucosaminyl)-1-(1,2-diacyl-sn-glycero-3-phospho)-1D-myo-inositol + UDP + H(+). It functions in the pathway glycolipid biosynthesis; glycosylphosphatidylinositol-anchor biosynthesis. In terms of biological role, part of the complex catalyzing the transfer of N-acetylglucosamine from UDP-N-acetylglucosamine to phosphatidylinositol, the first step of GPI biosynthesis. This is Phosphatidylinositol N-acetylglucosaminyltransferase subunit gpi15 (gpi15) from Schizosaccharomyces pombe (strain 972 / ATCC 24843) (Fission yeast).